The sequence spans 119 residues: Phosphoribosyl-AMP cyclohydrolase (119 aa).

Asp77 lines the Mg(2+) pocket. Cys78 serves as a coordination point for Zn(2+). The Mg(2+) site is built by Asp79 and Asp81. Zn(2+)-binding residues include Cys94 and Cys101.

It belongs to the PRA-CH family. As to quaternary structure, homodimer. The cofactor is Mg(2+). Requires Zn(2+) as cofactor.

It is found in the cytoplasm. It catalyses the reaction 1-(5-phospho-beta-D-ribosyl)-5'-AMP + H2O = 1-(5-phospho-beta-D-ribosyl)-5-[(5-phospho-beta-D-ribosylamino)methylideneamino]imidazole-4-carboxamide. The protein operates within amino-acid biosynthesis; L-histidine biosynthesis; L-histidine from 5-phospho-alpha-D-ribose 1-diphosphate: step 3/9. Functionally, catalyzes the hydrolysis of the adenine ring of phosphoribosyl-AMP. The sequence is that of Phosphoribosyl-AMP cyclohydrolase from Cereibacter sphaeroides (strain ATCC 17029 / ATH 2.4.9) (Rhodobacter sphaeroides).